The following is a 402-amino-acid chain: S-adenosylmethionine synthase (402 aa).

An ATP-binding site is contributed by His-16. Position 18 (Asp-18) interacts with Mg(2+). Glu-44 provides a ligand contact to K(+). 2 residues coordinate L-methionine: Glu-57 and Gln-103. Residues Gln-103 to Thr-113 form a flexible loop region. ATP contacts are provided by residues Asp-178–Lys-180, Lys-249–Phe-250, Asp-258, Arg-264–Lys-265, Ala-281, and Lys-285. Asp-258 provides a ligand contact to L-methionine. An L-methionine-binding site is contributed by Lys-289.

This sequence belongs to the AdoMet synthase family. In terms of assembly, homotetramer; dimer of dimers. It depends on Mg(2+) as a cofactor. Requires K(+) as cofactor.

The protein localises to the cytoplasm. The catalysed reaction is L-methionine + ATP + H2O = S-adenosyl-L-methionine + phosphate + diphosphate. It participates in amino-acid biosynthesis; S-adenosyl-L-methionine biosynthesis; S-adenosyl-L-methionine from L-methionine: step 1/1. In terms of biological role, catalyzes the formation of S-adenosylmethionine (AdoMet) from methionine and ATP. The overall synthetic reaction is composed of two sequential steps, AdoMet formation and the subsequent tripolyphosphate hydrolysis which occurs prior to release of AdoMet from the enzyme. This chain is S-adenosylmethionine synthase, found in Mycolicibacterium gilvum (strain PYR-GCK) (Mycobacterium gilvum (strain PYR-GCK)).